Consider the following 300-residue polypeptide: Protein SPEAR4 (300 aa).

Residues 1 to 10 (MCSKTSSVSY) show a composition bias toward polar residues. The interval 1-45 (MCSKTSSVSYGNREDDDNYSSLCPKKQKHNNGGKKRVPRRGPGVA) is disordered. Positions 25–39 (KKQKHNNGGKKRVPR) are enriched in basic residues. An SPL motif is present at residues 40–48 (RGPGVAELE). Residues 294–300 (IDLRLKL) carry the EAR motif.

As to quaternary structure, interacts with SPL and SPEAR2. In terms of tissue distribution, expressed in leaves.

Adapter-like transcriptional repressor recruiting TPL/TPR coepressors to inhibit TCP transcription factors. May be involved in leaf development. This is Protein SPEAR4 from Arabidopsis thaliana (Mouse-ear cress).